Reading from the N-terminus, the 430-residue chain is Long-chain specific acyl-CoA dehydrogenase, mitochondrial (430 aa).

The N-terminal 30 residues, 1 to 30, are a transit peptide targeting the mitochondrion; the sequence is MAARLLLRSLRVLSARSATLPPPSARCSHS. Lysine 42 bears the N6-acetyllysine mark. A phosphoserine mark is found at serine 54 and serine 55. 2 positions are modified to N6-acetyllysine; alternate: lysine 66 and lysine 81. Residues lysine 66 and lysine 81 each carry the N6-succinyllysine; alternate modification. Residues lysine 92 and lysine 95 each carry the N6-acetyllysine modification. Lysine 165 is modified (N6-succinyllysine). 170 to 179 contributes to the FAD binding site; sequence IAMTEPGAGS. Serine 179 is a substrate binding site. Serine 191 is subject to Phosphoserine. FAD is bound at residue 203–205; sequence FIT. 227-228 lines the substrate pocket; sequence AH. Lysine 240 carries the N6-succinyllysine modification. An N6-acetyllysine; alternate mark is found at lysine 254 and lysine 279. Lysine 254 and lysine 279 each carry N6-succinyllysine; alternate. Substrate is bound by residues tyrosine 282 and 289-292; that span reads PQER. Glutamate 291 (proton acceptor) is an active-site residue. Residue arginine 317 coordinates FAD. Residue lysine 318 is modified to N6-acetyllysine. Lysine 322 is subject to N6-acetyllysine; alternate. Lysine 322 bears the N6-succinyllysine; alternate mark. Residue glutamine 328 coordinates FAD. N6-acetyllysine is present on lysine 358. Position 362 is a phosphoserine (serine 362). 385 to 389 lines the FAD pocket; that stretch reads QLHGG. 412–413 serves as a coordination point for substrate; sequence GG. 414-416 is an FAD binding site; that stretch reads TNE.

It belongs to the acyl-CoA dehydrogenase family. As to quaternary structure, homotetramer. It depends on FAD as a cofactor. Post-translationally, acetylation at Lys-318 and Lys-322 in proximity of the cofactor-binding sites strongly reduces catalytic activity. These sites are deacetylated by SIRT3.

The protein resides in the mitochondrion matrix. It catalyses the reaction a long-chain 2,3-saturated fatty acyl-CoA + oxidized [electron-transfer flavoprotein] + H(+) = a long-chain (2E)-enoyl-CoA + reduced [electron-transfer flavoprotein]. The enzyme catalyses octanoyl-CoA + oxidized [electron-transfer flavoprotein] + H(+) = (2E)-octenoyl-CoA + reduced [electron-transfer flavoprotein]. The catalysed reaction is decanoyl-CoA + oxidized [electron-transfer flavoprotein] + H(+) = (2E)-decenoyl-CoA + reduced [electron-transfer flavoprotein]. It carries out the reaction dodecanoyl-CoA + oxidized [electron-transfer flavoprotein] + H(+) = (2E)-dodecenoyl-CoA + reduced [electron-transfer flavoprotein]. It catalyses the reaction tetradecanoyl-CoA + oxidized [electron-transfer flavoprotein] + H(+) = (2E)-tetradecenoyl-CoA + reduced [electron-transfer flavoprotein]. The enzyme catalyses oxidized [electron-transfer flavoprotein] + hexadecanoyl-CoA + H(+) = (2E)-hexadecenoyl-CoA + reduced [electron-transfer flavoprotein]. The catalysed reaction is octadecanoyl-CoA + oxidized [electron-transfer flavoprotein] + H(+) = (2E)-octadecenoyl-CoA + reduced [electron-transfer flavoprotein]. It carries out the reaction (5E)-tetradecenoyl-CoA + oxidized [electron-transfer flavoprotein] + H(+) = (2E,5E)-tetradecadienoyl-CoA + reduced [electron-transfer flavoprotein]. It catalyses the reaction (5Z)-tetradecenoyl-CoA + oxidized [electron-transfer flavoprotein] + H(+) = (2E,5Z)-tetradecadienoyl-CoA + reduced [electron-transfer flavoprotein]. The enzyme catalyses oxidized [electron-transfer flavoprotein] + (9Z)-octadecenoyl-CoA + H(+) = (2E,9Z)-octadecadienoyl-CoA + reduced [electron-transfer flavoprotein]. The catalysed reaction is hexanoyl-CoA + oxidized [electron-transfer flavoprotein] + H(+) = (2E)-hexenoyl-CoA + reduced [electron-transfer flavoprotein]. It carries out the reaction eicosanoyl-CoA + oxidized [electron-transfer flavoprotein] + H(+) = (2E)-eicosenoyl-CoA + reduced [electron-transfer flavoprotein]. It catalyses the reaction docosanoyl-CoA + oxidized [electron-transfer flavoprotein] + H(+) = (2E)-docosenoyl-CoA + reduced [electron-transfer flavoprotein]. The enzyme catalyses tetracosanoyl-CoA + oxidized [electron-transfer flavoprotein] + H(+) = (2E)-tetracosenoyl-CoA + reduced [electron-transfer flavoprotein]. It participates in lipid metabolism; mitochondrial fatty acid beta-oxidation. Its activity is regulated as follows. Inhibited by crotonyl-CoA, 2-octenoyl-CoA and 2-hexadecenoyl-CoA. Functionally, long-chain specific acyl-CoA dehydrogenase is one of the acyl-CoA dehydrogenases that catalyze the first step of mitochondrial fatty acid beta-oxidation, an aerobic process breaking down fatty acids into acetyl-CoA and allowing the production of energy from fats. The first step of fatty acid beta-oxidation consists in the removal of one hydrogen from C-2 and C-3 of the straight-chain fatty acyl-CoA thioester, resulting in the formation of trans-2-enoyl-CoA. Among the different mitochondrial acyl-CoA dehydrogenases, long-chain specific acyl-CoA dehydrogenase can act on saturated and unsaturated acyl-CoAs with 6 to 24 carbons with a preference for 8 to 18 carbons long primary chains. This is Long-chain specific acyl-CoA dehydrogenase, mitochondrial from Rattus norvegicus (Rat).